Reading from the N-terminus, the 145-residue chain is UPF0179 protein TV1250 (145 aa).

The protein belongs to the UPF0179 family.

This Thermoplasma volcanium (strain ATCC 51530 / DSM 4299 / JCM 9571 / NBRC 15438 / GSS1) protein is UPF0179 protein TV1250.